The following is a 137-amino-acid chain: MAPKAEKKPAEKKPTEEKAEKKPRAEKRVPGKEGGEKKGKKKAKKSVETYKIYIFKVLKQVHPDIGISSKAMSIMNSFINDIFEKLAAEAAKLARYNKKPTITSREIQTSVRLVLPGELAKHAVSEGTKAVTKFTSS.

Over residues 1–37 (MAPKAEKKPAEKKPTEEKAEKKPRAEKRVPGKEGGEK) the composition is skewed to basic and acidic residues. The tract at residues 1-45 (MAPKAEKKPAEKKPTEEKAEKKPRAEKRVPGKEGGEKKGKKKAKK) is disordered. An N6-acetyllysine mark is found at K7 and K27. Residue K133 forms a Glycyl lysine isopeptide (Lys-Gly) (interchain with G-Cter in ubiquitin) linkage.

It belongs to the histone H2B family. In terms of assembly, the nucleosome is a histone octamer containing two molecules each of H2A, H2B, H3 and H4 assembled in one H3-H4 heterotetramer and two H2A-H2B heterodimers. The octamer wraps approximately 147 bp of DNA. In terms of processing, can be acetylated to form H2BK6ac and H2BK33ac. Monoubiquitinated to form H2BK143ub1; may give a specific tag for epigenetic transcriptional activation.

It localises to the nucleus. It is found in the chromosome. Its function is as follows. Core component of nucleosome. Nucleosomes wrap and compact DNA into chromatin, limiting DNA accessibility to the cellular machineries which require DNA as a template. Histones thereby play a central role in transcription regulation, DNA repair, DNA replication and chromosomal stability. DNA accessibility is regulated via a complex set of post-translational modifications of histones, also called histone code, and nucleosome remodeling. This Zea mays (Maize) protein is Histone H2B.4.